Consider the following 282-residue polypeptide: Chorismate dehydratase (282 aa).

The protein belongs to the MqnA/MqnD family. MqnA subfamily.

The enzyme catalyses chorismate = 3-[(1-carboxyvinyl)-oxy]benzoate + H2O. It functions in the pathway quinol/quinone metabolism; menaquinone biosynthesis. Catalyzes the dehydration of chorismate into 3-[(1-carboxyvinyl)oxy]benzoate, a step in the biosynthesis of menaquinone (MK, vitamin K2). The chain is Chorismate dehydratase from Streptomyces coelicolor (strain ATCC BAA-471 / A3(2) / M145).